A 374-amino-acid polypeptide reads, in one-letter code: uncharacterized protein (374 aa).

A disordered region spans residues 182-201; the sequence is PALGESPQGQKSSASSDKAV. The span at 188–197 shows a compositional bias: polar residues; it reads PQGQKSSASS.

This is an uncharacterized protein from Rattus norvegicus (Rat).